We begin with the raw amino-acid sequence, 355 residues long: MFENLDSVVDKFKDLEVKVADPEVIADMENWTKLMKEHADLEPVVNKYLSYKDNLKNLEEDKELLGTTGDSEMEELLKDEISTLEEQIEKDQEELKILLLPKDPNDEKNVFIEIRAGAGGDEAGLFAGELLRMYQMYSDKKHWTTEIMDIQQQGVGGIKEVVMMVKGKGAYSRLKYESGVHRVQRVPQTESSGRIHTSTATVAVLPEAEDVDVKIEQKDLRIDVFRASGNGGQCVNTTDSAVRITHIPTGLVVTCQDEKSQIKNKDKAMKVLKSRLYDLMEEEKNKDRADARKSQVGTGDRSERIRTYNFPQGRITDHRINKTIFQLQNFLDGDIEEMIDDLTSYDQAEKLKMMN.

Glutamine 233 bears the N5-methylglutamine mark. Basic and acidic residues predominate over residues 283–293 (EKNKDRADARK). The segment at 283–304 (EKNKDRADARKSQVGTGDRSER) is disordered.

Belongs to the prokaryotic/mitochondrial release factor family. Post-translationally, methylated by PrmC. Methylation increases the termination efficiency of RF1.

The protein localises to the cytoplasm. Peptide chain release factor 1 directs the termination of translation in response to the peptide chain termination codons UAG and UAA. This is Peptide chain release factor 1 from Finegoldia magna (strain ATCC 29328 / DSM 20472 / WAL 2508) (Peptostreptococcus magnus).